Reading from the N-terminus, the 177-residue chain is Ubiquinol-cytochrome c reductase iron-sulfur subunit (177 aa).

The helical transmembrane segment at Ile18 to Ile38 threads the bilayer. One can recognise a Rieske domain in the interval Ala88 to Arg175. Positions 120, 122, 139, and 142 each coordinate [2Fe-2S] cluster. Residues Cys125 and Cys141 are joined by a disulfide bond.

Belongs to the Rieske iron-sulfur protein family. As to quaternary structure, the main subunits of complex b-c1 are: cytochrome b, cytochrome c1 and the Rieske protein. [2Fe-2S] cluster serves as cofactor.

It localises to the cell membrane. The enzyme catalyses a quinol + 2 Fe(III)-[cytochrome c](out) = a quinone + 2 Fe(II)-[cytochrome c](out) + 2 H(+)(out). Component of the ubiquinol-cytochrome c reductase complex (complex III or cytochrome b-c1 complex), which is a respiratory chain that generates an electrochemical potential coupled to ATP synthesis. This is Ubiquinol-cytochrome c reductase iron-sulfur subunit (petA) from Rickettsia prowazekii (strain Madrid E).